The chain runs to 78 residues: Probable two-component-system connector protein YcgZ (78 aa).

Functionally, probably a connector protein for RcsB/C regulation of biofilm formation, providing additional signal input into the two-component signaling pathway. Partially antagonizes the activities of YmgA and AriR, proteins that, via the Rcs phosphorelay, promote the synthesis of colanic acid, an exopolysaccharide and matrix component. The sequence is that of Probable two-component-system connector protein YcgZ (ycgZ) from Escherichia coli (strain K12).